The primary structure comprises 103 residues: Large ribosomal subunit protein uL24 (103 aa).

This sequence belongs to the universal ribosomal protein uL24 family. In terms of assembly, part of the 50S ribosomal subunit.

Its function is as follows. One of two assembly initiator proteins, it binds directly to the 5'-end of the 23S rRNA, where it nucleates assembly of the 50S subunit. One of the proteins that surrounds the polypeptide exit tunnel on the outside of the subunit. The sequence is that of Large ribosomal subunit protein uL24 from Glaesserella parasuis serovar 5 (strain SH0165) (Haemophilus parasuis).